A 366-amino-acid chain; its full sequence is Spermine synthase (366 aa).

A2 is subject to N-acetylalanine. S57 is modified (phosphoserine). In terms of domain architecture, PABS spans 122 to 362 (RYWPTADGRL…ELWVFYTVWK (241 aa)). Q148 serves as a coordination point for S-adenosyl 3-(methylsulfanyl)propylamine. Residues Y177 and D201 each contribute to the spermidine site. S-adenosyl 3-(methylsulfanyl)propylamine-binding positions include E220 and 255-256 (DC). Residue D276 is the Proton acceptor of the active site. The spermidine site is built by Y351 and E353.

Belongs to the spermidine/spermine synthase family. In terms of assembly, homodimer. Dimerization is mediated through the N-terminal domain and seems to be required for activity as deletion of the N-terminal domain causes complete loss of activity.

The catalysed reaction is S-adenosyl 3-(methylsulfanyl)propylamine + spermidine = spermine + S-methyl-5'-thioadenosine + H(+). It participates in amine and polyamine biosynthesis; spermine biosynthesis; spermine from spermidine: step 1/1. Catalyzes the production of spermine from spermidine and decarboxylated S-adenosylmethionine (dcSAM). Required for normal viability, growth and fertility. This Mus musculus (Mouse) protein is Spermine synthase (Sms).